Here is a 468-residue protein sequence, read N- to C-terminus: Heparan-sulfate 6-O-sulfotransferase 2 (468 aa).

Over methionine 1–arginine 9 the chain is Cytoplasmic. The helical; Signal-anchor for type II membrane protein transmembrane segment at leucine 10–serine 30 threads the bilayer. Residues threonine 31 to arginine 468 lie on the Lumenal side of the membrane. Asparagine 79 carries N-linked (GlcNAc...) asparagine glycosylation. Residue histidine 103–threonine 111 participates in 3'-phosphoadenylyl sulfate binding. Residues lysine 133–lysine 134, arginine 150, tryptophan 155, and histidine 160 each bind substrate. Histidine 160 acts as the Proton acceptor in catalysis. 3'-phosphoadenylyl sulfate-binding residues include arginine 197 and serine 205. Substrate-binding residues include histidine 209 and tryptophan 216. The N-linked (GlcNAc...) asparagine glycan is linked to asparagine 276. Residue threonine 329–leucine 331 coordinates 3'-phosphoadenylyl sulfate. An N-linked (GlcNAc...) asparagine glycan is attached at asparagine 332. Position 335 to 336 (arginine 335 to alanine 336) interacts with 3'-phosphoadenylyl sulfate. The interval phenylalanine 409–asparagine 447 is disordered. The segment covering alanine 425–glutamate 437 has biased composition (basic and acidic residues). A compositionally biased stretch (acidic residues) spans serine 438 to asparagine 447.

Belongs to the sulfotransferase 6 family. As to expression, expressed ubiquitously during gastrulation. During early somitogenesis, strong expression in head and presumptive brain. During mid-somitogenesis, strong expression in eye, hindbrain and somitic boundaries and weak expression in tail bud. During late somitogenesis, strong expression in eye, hindbrain, branchial arch primordia, spinal cord and ventral medial somites. At 24 hours post-fertilization (hpf), strong expression throughout the head, with expression receeding from the trunk spinal cord, ventral medial somites and somitic boundaries; expressed in cells surrounding vascular structures of the dorsal aorta and caudal vein in the tail. At 36 hpf, expressed in lens, optic stalk, hindbrain and pectoral fin. At 48 hpf, expressed in eye, brain, otic vesicle and branchial arches.

The protein resides in the membrane. It catalyses the reaction alpha-D-glucosaminyl-[heparan sulfate](n) + 3'-phosphoadenylyl sulfate = 6-sulfo-alpha-D-glucosaminyl-[heparan sulfate](n) + adenosine 3',5'-bisphosphate + H(+). Its function is as follows. 6-O-sulfation enzyme which catalyzes the transfer of sulfate from 3'-phosphoadenosine 5'-phosphosulfate (PAPS) to position 6 of the N-sulfoglucosamine residue (GlcNS) of heparan sulfate. Required for muscle development and angiogenesis. The protein is Heparan-sulfate 6-O-sulfotransferase 2 (hs6st2) of Danio rerio (Zebrafish).